A 963-amino-acid chain; its full sequence is Respiratory burst oxidase homolog protein A (963 aa).

Basic and acidic residues predominate over residues 1–12 (MRGLPGHERRWT). Residues 1–36 (MRGLPGHERRWTSDTVSSGKDLSGESSPGTDSGNIS) are disordered. Topologically, residues 1 to 399 (MRGLPGHERR…VYSLQENWKR (399 aa)) are cytoplasmic. Residues 13–36 (SDTVSSGKDLSGESSPGTDSGNIS) show a composition bias toward polar residues. EF-hand-like regions lie at residues 219 to 227 (AKDGYLYRS) and 253 to 264 (RRLKVDKISKEE). The 36-residue stretch at 276 to 311 (SFDSRLQIFFDMVDKNEDGRIGEEEVKEIIMLSASA) folds into the EF-hand domain. Residues Asp-289, Asn-291, Asp-293, Arg-295, and Glu-300 each contribute to the Ca(2+) site. The helical transmembrane segment at 400-420 (IWVLVLWILIMIGLFLWKFYL) threads the bilayer. Over 421–435 (YKQKSAFQVMGYCLL) the chain is Extracellular. A helical membrane pass occupies residues 436-456 (TAKGAAETLKFNMALILLPVC). Positions 438–595 (KGAAETLKFN…LLIIVYIVLI (158 aa)) constitute a Ferric oxidoreductase domain. At 457-482 (RNTITFLRSTKLSCFVPFDDNINFHK) the chain is on the cytoplasmic side. A helical membrane pass occupies residues 483-503 (TVAAAIVTGIILHAGNHLVCD). The Extracellular portion of the chain corresponds to 504 to 535 (FPKLIHANNTNYQKYLVNDFGPSQPQYIDLVK). A helical membrane pass occupies residues 536–556 (GVEGVTGIIMVILMAIAFTLA). The Cytoplasmic portion of the chain corresponds to 557–583 (TRWFRRSLIKFPKPFDRLTGFNAFWYS). Residues 584 to 604 (HHLLIIVYIVLIIHGTFLYLV) form a helical membrane-spanning segment. Residues 605 to 759 (HNWYSKTTWM…APAQDYRKYD (155 aa)) lie on the Extracellular side of the membrane. The FAD-binding FR-type domain occupies 634–754 (SGLYTVRLLK…DGPYGAPAQD (121 aa)). A helical membrane pass occupies residues 760 to 780 (VLLLVGLGIGATPFISILKDL). Residues 781 to 963 (LKNIVTMEEQ…TKFEFHKEHF (183 aa)) are Cytoplasmic-facing.

The protein belongs to the RBOH (TC 5.B.1.3) family. Monomer and homodimer. Post-translationally, phosphorylated by CPK.

The protein resides in the cell membrane. Its function is as follows. Calcium-dependent NADPH oxidase that generates superoxide. Involved in the rapid and transient phase I oxidative burst induced by pathogen infection. This Solanum tuberosum (Potato) protein is Respiratory burst oxidase homolog protein A (RBOHA).